The following is a 95-amino-acid chain: UPF0235 protein A2cp1_1215 (95 aa).

It belongs to the UPF0235 family.

The chain is UPF0235 protein A2cp1_1215 from Anaeromyxobacter dehalogenans (strain 2CP-1 / ATCC BAA-258).